The following is an 82-amino-acid chain: Ice-structuring protein A (82 aa).

The signal sequence occupies residues 1-23 (MALSLFTVGQLIFLFWTMRITEA). A propeptide spans 24–44 (SPDPAAKAAPAAAAAPAAAAP) (removed by a dipeptidylpeptidase). An Arginine amide modification is found at R81.

This sequence belongs to the type-I AFP family. Detected in liver and in blood serum (at protein level).

Its subcellular location is the secreted. Contributes to protect fish blood from freezing at subzero sea water temperatures. Lowers the blood freezing point. Binds to nascent ice crystals and prevents further growth. The chain is Ice-structuring protein A from Pseudopleuronectes americanus (Winter flounder).